The primary structure comprises 735 residues: Ion-translocating oxidoreductase complex subunit C (735 aa).

4Fe-4S ferredoxin-type domains lie at 368-397 and 407-436; these read MGAP…QQLY and KATA…VQYF. Residues Cys-377, Cys-380, Cys-383, Cys-387, Cys-416, Cys-419, Cys-422, and Cys-426 each coordinate [4Fe-4S] cluster. The segment at 534-711 is disordered; that stretch reads QARAKQAAHP…EPVEPADPRK (178 aa).

The protein belongs to the 4Fe4S bacterial-type ferredoxin family. RnfC subfamily. In terms of assembly, the complex is composed of six subunits: RsxA, RsxB, RsxC, RsxD, RsxE and RsxG. The cofactor is [4Fe-4S] cluster.

It is found in the cell inner membrane. Functionally, part of a membrane-bound complex that couples electron transfer with translocation of ions across the membrane. Required to maintain the reduced state of SoxR. In Salmonella paratyphi A (strain ATCC 9150 / SARB42), this protein is Ion-translocating oxidoreductase complex subunit C.